The following is a 120-amino-acid chain: Basic phospholipase A2 homolog piratoxin-3 (120 aa).

7 cysteine pairs are disulfide-bonded: cysteine 26-cysteine 113, cysteine 28-cysteine 44, cysteine 43-cysteine 94, cysteine 49-cysteine 120, cysteine 50-cysteine 87, cysteine 57-cysteine 81, and cysteine 75-cysteine 85. Positions 104–115 (KKYRYHLKPCKK) are important for membrane-damaging activities in eukaryotes and bacteria; heparin-binding.

It belongs to the phospholipase A2 family. Group II subfamily. D49 sub-subfamily. In terms of assembly, homodimer; non-covalently linked (probable alternative/compact dimer conformation). In terms of tissue distribution, expressed by the venom gland.

The protein resides in the secreted. Functionally, snake venom phospholipase A2 (PLA2) that lacks enzymatic activity. Shows high myotoxin activities. Also has anticoagulant activity. A model of myotoxic mechanism has been proposed: an apo Lys49-PLA2 is activated by the entrance of a hydrophobic molecule (e.g. fatty acid) at the hydrophobic channel of the protein leading to a reorientation of a monomer. This reorientation causes a transition between 'inactive' to 'active' states, causing alignment of C-terminal and membrane-docking sites (MDoS) side-by-side and putting the membrane-disruption sites (MDiS) in the same plane, exposed to solvent and in a symmetric position for both monomers. The MDoS region stabilizes the toxin on membrane by the interaction of charged residues with phospholipid head groups. Subsequently, the MDiS region destabilizes the membrane with penetration of hydrophobic residues. This insertion causes a disorganization of the membrane, allowing an uncontrolled influx of ions (i.e. calcium and sodium), and eventually triggering irreversible intracellular alterations and cell death. The chain is Basic phospholipase A2 homolog piratoxin-3 from Bothrops pirajai (Piraja's lancehead).